The primary structure comprises 260 residues: Outer membrane protein assembly factor BamD (260 aa).

A signal peptide spans 1 to 19 (MRKLKSFTFIALTAFAITA). A lipid anchor (N-palmitoyl cysteine) is attached at C20. C20 carries S-diacylglycerol cysteine lipidation.

The protein belongs to the BamD family. As to quaternary structure, part of the Bam complex.

It localises to the cell outer membrane. Part of the outer membrane protein assembly complex, which is involved in assembly and insertion of beta-barrel proteins into the outer membrane. This is Outer membrane protein assembly factor BamD from Pasteurella multocida (strain Pm70).